A 127-amino-acid polypeptide reads, in one-letter code: Protein chibby homolog 1 (127 aa).

The segment at 1 to 25 (MPLFGSIFSPKKTPPRKSASLSNLH) is disordered. Residues S9 and S20 each carry the phosphoserine modification. A minimal region for the interaction with PKD2 region spans residues 60-112 (VADSVISGGVDRRETQRLRKRNQQLEEENNLLRLKVDILLDMLSETTAESHLK). The stretch at 68–110 (GVDRRETQRLRKRNQQLEEENNLLRLKVDILLDMLSETTAESH) forms a coiled coil. A leucine-zipper; mediates homodimerization region spans residues 77–98 (LRKRNQQLEEENNLLRLKVDIL).

The protein belongs to the chibby family. In terms of assembly, homodimer. Homodimerization is essential for nuclear localization and interaction with KPNA4 but is dispensable for interaction with CTNNB1. Interacts with polycystin-2/PKD2 and GM130. Interacts with the C-terminal region of CTNNB1. Interacts (C-terminus) with TCIM (C-terminus), TCIM competes with CTNNB1 for the interaction with CBY1. Interacts with FAM92A; this interaction facilitates targeting of FAM92A to cilium basal body. Interacts with CIBAR2. Interacts with KPNA4. In terms of tissue distribution, found in heart, brain, lung, liver, muscle, kidney and testis. Levels are approximately 3-fold higher in embryonic and adult heart than in lung or liver.

It localises to the nucleus speckle. It is found in the cytoplasm. The protein resides in the cytoskeleton. The protein localises to the cilium basal body. Its subcellular location is the microtubule organizing center. It localises to the centrosome. It is found in the centriole. The protein resides in the golgi apparatus. The protein localises to the trans-Golgi network. Its subcellular location is the cell projection. It localises to the cilium. It is found in the flagellum. The protein resides in the nucleus. In terms of biological role, inhibits the Wnt/Wingless pathway by binding to CTNNB1/beta-catenin and inhibiting beta-catenin-mediated transcriptional activation through competition with TCF/LEF transcription factors. Has also been shown to play a role in regulating the intracellular trafficking of polycystin-2/PKD2 and possibly of other intracellular proteins. Promotes adipocyte and cardiomyocyte differentiation. The sequence is that of Protein chibby homolog 1 (Cby1) from Mus musculus (Mouse).